The following is a 455-amino-acid chain: Mitochondrial distribution and morphology protein 10 (455 aa).

Disordered regions lie at residues 216 to 249 (WETT…EDAV), 278 to 311 (IRFS…PSPA), and 377 to 399 (PRSS…PLGE). A compositionally biased stretch (low complexity) spans 217-227 (ETTNGENGTNT). Residues 228–237 (SAPGNASNSR) show a composition bias toward polar residues. The span at 291 to 301 (AQIPPPSPFTP) shows a compositional bias: pro residues.

The protein belongs to the MDM10 family. Component of the ER-mitochondria encounter structure (ERMES) or MDM complex, composed of MMM1, MDM10, MDM12 and MDM34. Associates with the mitochondrial outer membrane sorting assembly machinery SAM(core) complex.

Its subcellular location is the mitochondrion outer membrane. Functionally, component of the ERMES/MDM complex, which serves as a molecular tether to connect the endoplasmic reticulum and mitochondria. Components of this complex are involved in the control of mitochondrial shape and protein biogenesis and may function in phospholipid exchange. MDM10 is involved in the late assembly steps of the general translocase of the mitochondrial outer membrane (TOM complex). Functions in the TOM40-specific route of the assembly of outer membrane beta-barrel proteins, including the association of TOM40 with the receptor TOM22 and small TOM proteins. Can associate with the SAM(core) complex as well as the MDM12-MMM1 complex, both involved in late steps of the major beta-barrel assembly pathway, that is responsible for biogenesis of all outer membrane beta-barrel proteins. May act as a switch that shuttles between both complexes and channels precursor proteins into the TOM40-specific pathway. Plays a role in mitochondrial morphology and in the inheritance of mitochondria. The polypeptide is Mitochondrial distribution and morphology protein 10 (Coprinopsis cinerea (strain Okayama-7 / 130 / ATCC MYA-4618 / FGSC 9003) (Inky cap fungus)).